Reading from the N-terminus, the 407-residue chain is Subtilisin-like protease CPC735_013710 (407 aa).

Positions 1-17 are cleaved as a signal peptide; the sequence is MQLLNLSLFFLLPFATA. A propeptide spanning residues 18–115 is cleaved from the precursor; it reads NPIPQDSQNI…VLPDQKIYLA (98 aa). Residues 31–114 form the Inhibitor I9 domain; the sequence is QYIVTLKDGL…SVLPDQKIYL (84 aa). Positions 124–407 constitute a Peptidase S8 domain; it reads GWNLGYMSSK…VAYNGIQEML (284 aa). The N-linked (GlcNAc...) asparagine glycan is linked to Asn145. Residues Asp162 and His194 each act as charge relay system in the active site. N-linked (GlcNAc...) asparagine glycans are attached at residues Asn241, Asn254, and Asn341. The active-site Charge relay system is Ser350. An N-linked (GlcNAc...) asparagine glycan is attached at Asn381.

It belongs to the peptidase S8 family.

The protein resides in the secreted. Its function is as follows. Secreted subtilisin-like serine protease with keratinolytic activity that contributes to pathogenicity. This Coccidioides posadasii (strain C735) (Valley fever fungus) protein is Subtilisin-like protease CPC735_013710.